The sequence spans 216 residues: Somatotropin (216 aa).

Positions 1–26 (MAAGPRTSVLLAFALLCLPWTQEVGA) are cleaved as a signal peptide. His45 provides a ligand contact to Zn(2+). Residues Cys78 and Cys189 are joined by a disulfide bond. A Phosphoserine modification is found at Ser131. Glu198 lines the Zn(2+) pocket. Cysteines 206 and 214 form a disulfide.

Belongs to the somatotropin/prolactin family.

It is found in the secreted. In terms of biological role, plays an important role in growth control. Its major role in stimulating body growth is to stimulate the liver and other tissues to secrete IGF1. It stimulates both the differentiation and proliferation of myoblasts. It also stimulates amino acid uptake and protein synthesis in muscle and other tissues. The chain is Somatotropin (GH1) from Hippopotamus amphibius (Hippopotamus).